A 96-amino-acid chain; its full sequence is Co-chaperonin GroES (96 aa).

Belongs to the GroES chaperonin family. In terms of assembly, heptamer of 7 subunits arranged in a ring. Interacts with the chaperonin GroEL.

The protein localises to the cytoplasm. Functionally, together with the chaperonin GroEL, plays an essential role in assisting protein folding. The GroEL-GroES system forms a nano-cage that allows encapsulation of the non-native substrate proteins and provides a physical environment optimized to promote and accelerate protein folding. GroES binds to the apical surface of the GroEL ring, thereby capping the opening of the GroEL channel. The chain is Co-chaperonin GroES from Allochromatium vinosum (Chromatium vinosum).